Reading from the N-terminus, the 223-residue chain is Deoxyribose-phosphate aldolase (223 aa).

Residue D92 is the Proton donor/acceptor of the active site. Residue K154 is the Schiff-base intermediate with acetaldehyde of the active site. Residue K182 is the Proton donor/acceptor of the active site.

The protein belongs to the DeoC/FbaB aldolase family. DeoC type 1 subfamily.

Its subcellular location is the cytoplasm. The catalysed reaction is 2-deoxy-D-ribose 5-phosphate = D-glyceraldehyde 3-phosphate + acetaldehyde. It participates in carbohydrate degradation; 2-deoxy-D-ribose 1-phosphate degradation; D-glyceraldehyde 3-phosphate and acetaldehyde from 2-deoxy-alpha-D-ribose 1-phosphate: step 2/2. In terms of biological role, catalyzes a reversible aldol reaction between acetaldehyde and D-glyceraldehyde 3-phosphate to generate 2-deoxy-D-ribose 5-phosphate. The protein is Deoxyribose-phosphate aldolase of Pasteurella multocida (strain Pm70).